The primary structure comprises 536 residues: 2,3-bisphosphoglycerate-independent phosphoglycerate mutase (536 aa).

Residues Asp-19 and Ser-69 each coordinate Mn(2+). Ser-69 serves as the catalytic Phosphoserine intermediate. Substrate-binding positions include His-130, 160–161 (RD), Arg-192, Arg-198, 262–265 (RPDR), and Lys-335. Positions 402, 406, 443, 444, and 461 each coordinate Mn(2+).

Belongs to the BPG-independent phosphoglycerate mutase family. Monomer. Mn(2+) is required as a cofactor.

It catalyses the reaction (2R)-2-phosphoglycerate = (2R)-3-phosphoglycerate. Its pathway is carbohydrate degradation; glycolysis; pyruvate from D-glyceraldehyde 3-phosphate: step 3/5. Functionally, catalyzes the interconversion of 2-phosphoglycerate and 3-phosphoglycerate. The chain is 2,3-bisphosphoglycerate-independent phosphoglycerate mutase from Gloeobacter violaceus (strain ATCC 29082 / PCC 7421).